The sequence spans 908 residues: Flap endonuclease GEN homolog 1 (908 aa).

Residues 2 to 96 are XPG-N domain; that stretch reads GVNDLWQILE…SKRTQTRYGP (95 aa). Mg(2+) contacts are provided by Asp30, Glu75, Glu134, Glu136, Asp155, Asp157, and Asp208. An XPG-I domain region spans residues 122–208; sequence ECLGMPWVQA…VGLAVLLGCD (87 aa). A 5'-3' exonuclease domain region spans residues 208–383; that stretch reads DYLPKGVPGV…LLVLLTRYDM (176 aa). Residues 389 to 463 are chromodomain; the sequence is GRKTSNQLQP…VYQKQLSETK (75 aa). 4 disordered regions span residues 460–482, 629–650, 792–834, and 853–886; these read SETK…LPEA, YESE…QSNP, RDSS…NKLR, and AEDE…SWEN. Basic residues predominate over residues 465–476; it reads RKQKSMKNKPKG. A phosphoserine mark is found at Ser794 and Ser795. Positions 824-834 are enriched in basic and acidic residues; that stretch reads HVRDSTHNKLR.

This sequence belongs to the XPG/RAD2 endonuclease family. GEN subfamily. In terms of assembly, largely monomeric, dimerizes on the Holliday junction and the first nick occurs upon dimerization at the junction. Requires Mg(2+) as cofactor. In terms of tissue distribution, expressed in bone marrow and testis and to a lesser extent in thymus, spleen, brain and colon.

It localises to the nucleus. Its function is as follows. Endonuclease which resolves Holliday junctions (HJs) by the introduction of symmetrically related cuts across the junction point, to produce nicked duplex products in which the nicks can be readily ligated. Four-way DNA intermediates, also known as Holliday junctions, are formed during homologous recombination and DNA repair, and their resolution is necessary for proper chromosome segregation. Cleaves HJs by a nick and counter-nick mechanism involving dual coordinated incisions that lead to the formation of ligatable nicked duplex products. Cleavage of the first strand is rate limiting, while second strand cleavage is rapid. Largely monomeric, dimerizes on the HJ and the first nick occurs upon dimerization at the junction. Efficiently cleaves both single and double HJs contained within large recombination intermediates. Exhibits a weak sequence preference for incision between two G residues that reside in a T-rich region of DNA. Also has endonuclease activity on 5'-flap and replication fork (RF) DNA substrates. This Mus musculus (Mouse) protein is Flap endonuclease GEN homolog 1 (Gen1).